The primary structure comprises 329 residues: Transaldolase (329 aa).

The active-site Schiff-base intermediate with substrate is the K136.

Belongs to the transaldolase family. Type 1 subfamily. Homodimer.

It is found in the cytoplasm. It catalyses the reaction D-sedoheptulose 7-phosphate + D-glyceraldehyde 3-phosphate = D-erythrose 4-phosphate + beta-D-fructose 6-phosphate. The protein operates within carbohydrate degradation; pentose phosphate pathway; D-glyceraldehyde 3-phosphate and beta-D-fructose 6-phosphate from D-ribose 5-phosphate and D-xylulose 5-phosphate (non-oxidative stage): step 2/3. Transaldolase is important for the balance of metabolites in the pentose-phosphate pathway. This Methylococcus capsulatus (strain ATCC 33009 / NCIMB 11132 / Bath) protein is Transaldolase.